The chain runs to 257 residues: Glucanase inhibitor protein 1 (257 aa).

The signal sequence occupies residues 1 to 28 (MKVFPALTSALVALGTAGVEAEHVQRSL). The region spanning 29–256 (VMGGGTVPVG…GLEWINSVIK (228 aa)) is the Peptidase S1 domain. A disulfide bridge links cysteine 56 with cysteine 72. 2 N-linked (GlcNAc...) asparagine glycosylation sites follow: asparagine 107 and asparagine 180. 2 cysteine pairs are disulfide-bonded: cysteine 181–cysteine 191 and cysteine 201–cysteine 232. A glycan (N-linked (GlcNAc...) asparagine) is linked at asparagine 213.

This sequence belongs to the peptidase S1 family. Interacts with host endoglucanases EGaseA.

Its subcellular location is the secreted. Secreted effector that suppresses host plant glucan elicitor-mediated defense responses. Targets host endoglucanase EGaseA and inhibits the EGaseA-mediated release of elicitor-active glucan oligosaccharides from P.sojae cell walls. The protein is Glucanase inhibitor protein 1 of Phytophthora sojae (Soybean stem and root rot agent).